Consider the following 248-residue polypeptide: Probable transcriptional regulatory protein BT_2363 (248 aa).

This sequence belongs to the TACO1 family.

The protein resides in the cytoplasm. The sequence is that of Probable transcriptional regulatory protein BT_2363 from Bartonella tribocorum (strain CIP 105476 / IBS 506).